The following is a 75-amino-acid chain: Exodeoxyribonuclease 7 small subunit (75 aa).

It belongs to the XseB family. In terms of assembly, heterooligomer composed of large and small subunits.

It is found in the cytoplasm. The catalysed reaction is Exonucleolytic cleavage in either 5'- to 3'- or 3'- to 5'-direction to yield nucleoside 5'-phosphates.. Bidirectionally degrades single-stranded DNA into large acid-insoluble oligonucleotides, which are then degraded further into small acid-soluble oligonucleotides. This is Exodeoxyribonuclease 7 small subunit from Listeria welshimeri serovar 6b (strain ATCC 35897 / DSM 20650 / CCUG 15529 / CIP 8149 / NCTC 11857 / SLCC 5334 / V8).